The sequence spans 160 residues: SsrA-binding protein (160 aa).

Residues Y134 to D160 are disordered.

It belongs to the SmpB family.

It localises to the cytoplasm. Functionally, required for rescue of stalled ribosomes mediated by trans-translation. Binds to transfer-messenger RNA (tmRNA), required for stable association of tmRNA with ribosomes. tmRNA and SmpB together mimic tRNA shape, replacing the anticodon stem-loop with SmpB. tmRNA is encoded by the ssrA gene; the 2 termini fold to resemble tRNA(Ala) and it encodes a 'tag peptide', a short internal open reading frame. During trans-translation Ala-aminoacylated tmRNA acts like a tRNA, entering the A-site of stalled ribosomes, displacing the stalled mRNA. The ribosome then switches to translate the ORF on the tmRNA; the nascent peptide is terminated with the 'tag peptide' encoded by the tmRNA and targeted for degradation. The ribosome is freed to recommence translation, which seems to be the essential function of trans-translation. The chain is SsrA-binding protein from Pseudomonas fluorescens (strain SBW25).